Consider the following 169-residue polypeptide: Oleosin Cor a 15 (169 aa).

Helical transmembrane passes span 38-58 and 70-90; these read IAVV…GLTF and PLFV…GLAV. The Proline-knot signature appears at 70 to 81; the sequence is PLFVLCSPVLVP. Basic and acidic residues-rich tracts occupy residues 122-131 and 160-169; these read QMEHAKRRAQ and EGGRGEEKKT. The segment at 122 to 169 is disordered; the sequence is QMEHAKRRAQDTAGHLGQKARETGQTVTGKGQEAGKTLEGGRGEEKKT.

The protein belongs to the oleosin family. In terms of tissue distribution, expressed in seeds (at protein level).

It is found in the lipid droplet. The protein localises to the membrane. Its function is as follows. May have a structural role to stabilize the lipid body during desiccation of the seed by preventing coalescence of the oil. Probably interacts with both lipid and phospholipid moieties of lipid bodies. May also provide recognition signals for specific lipase anchorage in lipolysis during seedling growth. This Corylus avellana (European hazel) protein is Oleosin Cor a 15.